Here is a 90-residue protein sequence, read N- to C-terminus: UPF0213 protein lin0209 (90 aa).

One can recognise a GIY-YIG domain in the interval 5–80; the sequence is NEHFFYVLKC…KKLSRKNKDS (76 aa).

The protein belongs to the UPF0213 family.

The sequence is that of UPF0213 protein lin0209 from Listeria innocua serovar 6a (strain ATCC BAA-680 / CLIP 11262).